Here is a 402-residue protein sequence, read N- to C-terminus: Bisdemethoxycurcumin synthase (402 aa).

Cys-174 functions as the Acyl-thioester intermediate in the catalytic mechanism.

Belongs to the thiolase-like superfamily. Chalcone/stilbene synthases family. In terms of assembly, homodimer.

It catalyses the reaction 2 4-coumaroyl-CoA + malonyl-CoA + H2O + H(+) = bisdemethoxycurcumin + 2 CO2 + 3 CoA. The protein operates within secondary metabolite biosynthesis; flavonoid biosynthesis. Its function is as follows. Plant-specific type III polyketide synthase (PKS) that catalyzes the one-pot formation of the C6-C7-C6 diarylheptanoid scaffold of bisdemethoxycurcumin by the condensation of two molecules of 4-coumaroyl-CoA and one molecule of malonyl-CoA. The sequence is that of Bisdemethoxycurcumin synthase from Oryza sativa subsp. japonica (Rice).